The primary structure comprises 519 residues: Nitrogen fixation regulatory protein (519 aa).

Positions 23–93 constitute a PAS 1 domain; the sequence is LPEIFRQTVE…QALWGRLAQK (71 aa). Positions 94 to 148 constitute a PAC domain; it reads KPWSGVLVNRRKDKTLYLAELTVAPVLNEAGETIYYLGMHRDTSELHELEQRVNN. The 67-residue stretch at 151-217 folds into the PAS 2 domain; it reads LMIEAVVNAA…FETLENQGSA (67 aa). The 216-residue stretch at 302 to 517 folds into the Histidine kinase domain; that stretch reads AAIHRLQGPV…RIVVELPFSA (216 aa). A Phosphohistidine; by autocatalysis modification is found at His-305.

The cofactor is FAD.

It catalyses the reaction ATP + protein L-histidine = ADP + protein N-phospho-L-histidine.. Required for the inhibition of NifA activity in response to oxygen and low level of fixed nitrogen. This chain is Nitrogen fixation regulatory protein (nifL), found in Azotobacter vinelandii.